Here is a 296-residue protein sequence, read N- to C-terminus: MTAEKAPSFQELILRLQSYWASKGCAILQPYDVEVGAGTLHPATTLRSLGPRPWKAAYVQPSRRPGDGRYGENPNRLQHYYQFQVLLKPCPTDLQDLYLGSLDAIGIDRDLHDVRFVEDDWENPTVGAWGLGWEVWCDGMEVSQFTYFQQVGGQDVELVSGELTYGLERLAMYVQGVENVYDLDFNGAGMTYGDVFLEAEKQYSEFNFEHADVDMLIEWFKGAENQCMALLNLDKPLPLPAYDFCLKASHLFNLVDARGAISVAERASWIARVRELAKGCADAWVKSERALAEAAE.

The protein belongs to the class-II aminoacyl-tRNA synthetase family. In terms of assembly, tetramer of two alpha and two beta subunits.

It is found in the cytoplasm. It catalyses the reaction tRNA(Gly) + glycine + ATP = glycyl-tRNA(Gly) + AMP + diphosphate. In Maricaulis maris (strain MCS10) (Caulobacter maris), this protein is Glycine--tRNA ligase alpha subunit.